The chain runs to 216 residues: MAKSLLCSSTLNPFFSTTLSSSKKNQIAYSGNSKNQTSSSLLWKRRELSLGFMSSLVAIGLVSNDRRRHDANAAILEADDDEELLEKVKQDRKKRIERQAVLNSAVKEKGYLQDLVYKLSKVGQAIENNDLPAAGLVLGKGIDTEWVKTVNLAFTKLSTSPEENTEVEAFNSSLASLITSVNKNDIESSKLAFVSSAGAFEKWTTLTGLLEQLKGL.

Residues 1-38 (MAKSLLCSSTLNPFFSTTLSSSKKNQIAYSGNSKNQTS) constitute a chloroplast transit peptide. The N-terminal 35 residues, 39-73 (SSLLWKRRELSLGFMSSLVAIGLVSNDRRRHDANA), are a transit peptide targeting the thylakoid.

The protein localises to the plastid. It is found in the chloroplast thylakoid lumen. This is Thylakoid lumenal 16.5 kDa protein, chloroplastic from Arabidopsis thaliana (Mouse-ear cress).